A 909-amino-acid polypeptide reads, in one-letter code: MSEKLQAIELEKSYNPKEFEERIYSFWEANKCFSPIKKKNTKNTFTVVIPPPNVTGVLHVGHALDETLQDVIVRYHRMKGDETLWIPGTDHAGIATQSVVEKKLKAEGKNRRDLGREAFIEKVWEVKNEHHSIITKQLRKMGVSVDWDRERFTLDEGLSQAVREVFVSLYEQGLIYQGNYLVNWCPSCGTAISDDEVEHEDRKGGMYHIYYKLADGAVLQNEAGEKIQEIEIATTRPETLLGDTAIAVHPEDPRYASIIGKEVILPLANRKIPVIADSYVDKEFGTGVVKITPAHDPNDWEVGKRHNLPVLNILNPDGTLNDAVPEKYRGLSTEKARKAVIEDLEELGLFKNEEKIKHAVGCCYRCHTSIEPYVSKQWFVKMQPLAQKALDAWKKGDVVFYPQKWENTYAHWMNNIRDWCISRQLWWGHRIPVWYCADCGKTIVSRTDITECPHCKSKNIKQDEDVLDTWFSSWLWPFSTLGWPEKTEDLARFFPTSALVTGHDIIFFWVARMIMASLQFTGKAPFKDIFIHGLVRDKQGRKMSKSLGNGIDPLVAIEEFGADAMKFTLTFMCGSQSQDFLIDMESFKLGSKFANKVWNASRYILGNLAGRTIVPVGRDGSLNSLKELDRWIYHELNEAAQTVRSSLDSYRYNEAAQKVYEFFWNNFCDWYVEGTKLSFKYGDEKEKDRAASVLLAVLEESLRLLHPFLAFVTEEIYSKLPGNCAEGALPRAKILMTSDYPEEKKERIDEAASIRFRTLQEIVRNIRALRAECGIDPQLKLKVSLYIEKNSPAEAARENSEIIEMLSGLSGLDFIDSLKEKPASSIGVVGAGFEAFLITGDSIDIDQLKKRFEKELEKNEQNASKIDSKLKNENFVKNAPPEVIEGEKEKHAEFLRRIEKLKGYLEGMR.

Positions 52–62 (PNVTGVLHVGH) match the 'HIGH' region motif. Residues 542–546 (KMSKS) carry the 'KMSKS' region motif. Lys-545 contributes to the ATP binding site. Residues 843–902 (IDIDQLKKRFEKELEKNEQNASKIDSKLKNENFVKNAPPEVIEGEKEKHAEFLRRIEKLK) are a coiled coil.

This sequence belongs to the class-I aminoacyl-tRNA synthetase family. ValS type 1 subfamily. As to quaternary structure, monomer.

Its subcellular location is the cytoplasm. The catalysed reaction is tRNA(Val) + L-valine + ATP = L-valyl-tRNA(Val) + AMP + diphosphate. In terms of biological role, catalyzes the attachment of valine to tRNA(Val). As ValRS can inadvertently accommodate and process structurally similar amino acids such as threonine, to avoid such errors, it has a 'posttransfer' editing activity that hydrolyzes mischarged Thr-tRNA(Val) in a tRNA-dependent manner. The protein is Valine--tRNA ligase of Treponema denticola (strain ATCC 35405 / DSM 14222 / CIP 103919 / JCM 8153 / KCTC 15104).